We begin with the raw amino-acid sequence, 218 residues long: Glutathione S-transferase Mu 1 (218 aa).

Residues 2-88 (PMTLGYWDVR…YLARKHGLCG (87 aa)) enclose the GST N-terminal domain. Glutathione-binding positions include 7 to 8 (YW), 46 to 50 (WLSEK), 59 to 60 (NL), and 72 to 73 (QS). The GST C-terminal domain maps to 90–208 (TEEERIRVDI…KSSRFIRVPV (119 aa)). Y116 serves as a coordination point for substrate.

Belongs to the GST superfamily. Mu family. As to quaternary structure, homodimer. Well expressed in rabbit liver, brain and kidney.

It localises to the cytoplasm. The enzyme catalyses RX + glutathione = an S-substituted glutathione + a halide anion + H(+). In terms of biological role, conjugation of reduced glutathione to a wide number of exogenous and endogenous hydrophobic electrophiles. The sequence is that of Glutathione S-transferase Mu 1 from Oryctolagus cuniculus (Rabbit).